The chain runs to 190 residues: Protein LIGHT-DEPENDENT SHORT HYPOCOTYLS 1 (190 aa).

Residues 1 to 26 are compositionally biased toward polar residues; that stretch reads MDLISHQPNKNPNSSTQLTPPSSSRY. Disordered stretches follow at residues 1–28 and 145–190; these read MDLISHQPNKNPNSSTQLTPPSSSRYEN and GVSY…GATV. In terms of domain architecture, ALOG spans 25-152; sequence RYENQKRRDW…ARGVSYEKKR (128 aa). The short motif at 150–154 is the Nuclear localization signal element; it reads KKRKR. Low complexity predominate over residues 158-179; it reads QKPQTQPPLQLQQQQQQPQQGQ. A compositionally biased stretch (polar residues) spans 180-190; sequence SMMANYSGATV.

It belongs to the plant homeotic and developmental regulators ALOG protein family. In terms of tissue distribution, expressed in hypocotyls, shoot apices and lateral root primordia and, weakly, in vascular tissues.

It is found in the nucleus. Probable transcription regulator that acts as a developmental regulator by promoting cell growth in response to continuous red (cR), far-red (cFR) and blue (cB) light in a phytochrome-dependent manner, at least during seedling development. The chain is Protein LIGHT-DEPENDENT SHORT HYPOCOTYLS 1 (LSH1) from Arabidopsis thaliana (Mouse-ear cress).